Consider the following 121-residue polypeptide: Mediator of RNA polymerase II transcription subunit 22 (121 aa).

The protein belongs to the Mediator complex subunit 22 family. In terms of assembly, component of the Mediator complex.

The protein localises to the nucleus. Component of the Mediator complex, a coactivator involved in the regulated transcription of nearly all RNA polymerase II-dependent genes. Mediator functions as a bridge to convey information from gene-specific regulatory proteins to the basal RNA polymerase II transcription machinery. Mediator is recruited to promoters by direct interactions with regulatory proteins and serves as a scaffold for the assembly of a functional preinitiation complex with RNA polymerase II and the general transcription factors. In Eremothecium gossypii (strain ATCC 10895 / CBS 109.51 / FGSC 9923 / NRRL Y-1056) (Yeast), this protein is Mediator of RNA polymerase II transcription subunit 22 (SRB6).